Reading from the N-terminus, the 367-residue chain is MSRKTVSRTFSSFSISVVAVAVASTFSAHAGKFNPKFLEDVQGVGQHVDLTMFEKGQEQQLPGIYRVSVYVNEQRMETRTLEFKEATEAQRKAMGESLVPCLSRTQLAEMGVRVESFPALNLVSAEACVPFDEIIPLASSHFDFSEQKLVLSFPQAAMHQVARGTVPESLWDEGIPALLLDYSFSGSNSEYDSTGSSSSYVDDNGTVHHDDGKDTLKSDSYYLNLRSGLNLGAWRLRNYSTWSHSGGKAQWDNIGTSLSRAIIPFKAQLTMGDTATAGDIFDSVQMRGAMLASDEEMLPDSQRGFAPIVRGIAKSNAEVSIEQNGYVIYRTYVQPGAFEINDLYPTANSGDLTVIIKEADGSEQRFI.

Positions 1–30 (MSRKTVSRTFSSFSISVVAVAVASTFSAHA) are cleaved as a signal peptide.

The protein belongs to the fimbrial export usher family.

It localises to the cell outer membrane. Its function is as follows. Part of the lpfABCC'DE fimbrial operon. LP fimbriae may participate in the interaction with eukaryotic cells by assisting in microcolony formation. Could be involved in the export and assembly of the fimbrial subunits across the outer membrane. This Escherichia coli O157:H7 protein is Probable outer membrane usher protein LpfC (lpfC).